The chain runs to 454 residues: Probable mitochondrial saccharopine dehydrogenase-like oxidoreductase At5g39410 (454 aa).

At methionine 1 the chain carries N-acetylmethionine. The disordered stretch occupies residues 215-234 (RRSRPRRPRPTICGPPAKGP).

Belongs to the saccharopine dehydrogenase family.

It is found in the mitochondrion membrane. The protein is Probable mitochondrial saccharopine dehydrogenase-like oxidoreductase At5g39410 of Arabidopsis thaliana (Mouse-ear cress).